The sequence spans 908 residues: Protein translocase subunit SecA (908 aa).

Residues Gln-87, 105–109, and Asp-512 each bind ATP; that span reads GEGKT. Residues 866 to 908 are disordered; it reads GSDEDDAIAAHTPMIRDGDKVGRNDPCPCGSGRKYKQCHGKLS. The span at 879-888 shows a compositional bias: basic and acidic residues; the sequence is MIRDGDKVGR. 4 residues coordinate Zn(2+): Cys-892, Cys-894, Cys-903, and His-904. Basic residues predominate over residues 898-908; the sequence is RKYKQCHGKLS.

This sequence belongs to the SecA family. In terms of assembly, monomer and homodimer. Part of the essential Sec protein translocation apparatus which comprises SecA, SecYEG and auxiliary proteins SecDF-YajC and YidC. Zn(2+) serves as cofactor.

The protein localises to the cell inner membrane. It is found in the cytoplasm. It catalyses the reaction ATP + H2O + cellular proteinSide 1 = ADP + phosphate + cellular proteinSide 2.. In terms of biological role, part of the Sec protein translocase complex. Interacts with the SecYEG preprotein conducting channel. Has a central role in coupling the hydrolysis of ATP to the transfer of proteins into and across the cell membrane, serving both as a receptor for the preprotein-SecB complex and as an ATP-driven molecular motor driving the stepwise translocation of polypeptide chains across the membrane. The polypeptide is Protein translocase subunit SecA (Shewanella oneidensis (strain ATCC 700550 / JCM 31522 / CIP 106686 / LMG 19005 / NCIMB 14063 / MR-1)).